A 119-amino-acid chain; its full sequence is Large ribosomal subunit protein bL20 (119 aa).

It belongs to the bacterial ribosomal protein bL20 family.

In terms of biological role, binds directly to 23S ribosomal RNA and is necessary for the in vitro assembly process of the 50S ribosomal subunit. It is not involved in the protein synthesizing functions of that subunit. In Burkholderia cenocepacia (strain HI2424), this protein is Large ribosomal subunit protein bL20.